The sequence spans 588 residues: D-3-phosphoglycerate dehydrogenase 3, chloroplastic (588 aa).

The transit peptide at 1–38 (MATSLNLSSIFSSSSRLVTTPSSVFPIRQRRRIILVTS) directs the protein to the chloroplast. Residues 195–196 (KV), aspartate 215, 274–276 (VAR), and aspartate 300 each bind NAD(+). Arginine 276 is a catalytic residue. Residue glutamate 305 is part of the active site. Histidine 324 (proton donor) is an active-site residue. Residue 324-327 (HLGA) participates in NAD(+) binding. The 73-residue stretch at 516 to 588 (VILCRQVDQP…AIEEFVFLKL (73 aa)) folds into the ACT domain.

Belongs to the D-isomer specific 2-hydroxyacid dehydrogenase family. Expressed in aerial parts. Not detected in roots and meristematic tissue. Expressed in cotyledons, adult leaves, stigma and anther filaments. Detected in the embryo.

The protein resides in the plastid. It is found in the chloroplast. It carries out the reaction (2R)-3-phosphoglycerate + NAD(+) = 3-phosphooxypyruvate + NADH + H(+). The protein operates within amino-acid biosynthesis; L-serine biosynthesis; L-serine from 3-phospho-D-glycerate: step 1/3. With respect to regulation, partially inhibited by 1 mM serine. Functionally, involved in the plastidial phosphorylated pathway of serine biosynthesis (PPSB). In Arabidopsis thaliana (Mouse-ear cress), this protein is D-3-phosphoglycerate dehydrogenase 3, chloroplastic (PGDH3).